A 761-amino-acid polypeptide reads, in one-letter code: 52 kDa repressor of the inhibitor of the protein kinase (761 aa).

A THAP-type zinc finger spans residues 1–86 (MPNFCAAPNC…LRDNAIPTIF (86 aa)). Residues 116 to 132 (QKKIDETSEQEQKHKET) are compositionally biased toward basic and acidic residues. The interval 116–149 (QKKIDETSEQEQKHKETNNSNAQNPSEEEGEGQD) is disordered. Residue Ser-566 is modified to Phosphoserine.

Interacts with DNAJC3, probably sequestring it.

Its function is as follows. Upstream regulator of interferon-induced serine/threonine protein kinase R (PKR). May block the PKR-inhibitory function of DNAJC3, resulting in restoration of kinase activity and suppression of cell growth. In Homo sapiens (Human), this protein is 52 kDa repressor of the inhibitor of the protein kinase.